A 259-amino-acid polypeptide reads, in one-letter code: ATP synthase subunit a (259 aa).

Residues 1-10 (MFNLLNTYIT) constitute a propeptide, removed in mature form. The next 6 helical transmembrane spans lie at 36-56 (LTTF…LYTL), 92-112 (WGLY…ANLI), 125-145 (LVFI…LGLY), 150-170 (VFFS…LLVI), 191-211 (ILAG…FMLI), and 216-236 (LVFG…EFAI).

This sequence belongs to the ATPase A chain family. In terms of assembly, F-type ATPases have 2 components, CF(1) - the catalytic core - and CF(0) - the membrane proton channel. In yeast, the dimeric form of ATP synthase consists of 17 polypeptides: alpha, beta, gamma, delta, epsilon, 4 (B), 5 (OSCP), 6 (A), 8, 9 (C), d, E (Tim11), f, g, h, i/j and k.

Its subcellular location is the mitochondrion inner membrane. In terms of biological role, mitochondrial membrane ATP synthase (F(1)F(0) ATP synthase or Complex V) produces ATP from ADP in the presence of a proton gradient across the membrane which is generated by electron transport complexes of the respiratory chain. F-type ATPases consist of two structural domains, F(1) - containing the extramembraneous catalytic core and F(0) - containing the membrane proton channel, linked together by a central stalk and a peripheral stalk. During catalysis, ATP synthesis in the catalytic domain of F(1) is coupled via a rotary mechanism of the central stalk subunits to proton translocation. Key component of the proton channel; it may play a direct role in the translocation of protons across the membrane. In Saccharomyces cerevisiae (strain ATCC 204508 / S288c) (Baker's yeast), this protein is ATP synthase subunit a (ATP6).